Here is a 448-residue protein sequence, read N- to C-terminus: tRNA(Ile)-lysidine synthase (448 aa).

29–34 (SGGVDS) is a binding site for ATP.

It belongs to the tRNA(Ile)-lysidine synthase family.

It is found in the cytoplasm. It catalyses the reaction cytidine(34) in tRNA(Ile2) + L-lysine + ATP = lysidine(34) in tRNA(Ile2) + AMP + diphosphate + H(+). Its function is as follows. Ligates lysine onto the cytidine present at position 34 of the AUA codon-specific tRNA(Ile) that contains the anticodon CAU, in an ATP-dependent manner. Cytidine is converted to lysidine, thus changing the amino acid specificity of the tRNA from methionine to isoleucine. In Azoarcus sp. (strain BH72), this protein is tRNA(Ile)-lysidine synthase.